We begin with the raw amino-acid sequence, 562 residues long: MNIDVANLLTGNYILLLFVVLALGLCLGKLRLGSIQLGNSIGVLVVSLLLGQQHFSMNTDALNLGFMLFIFCVGVEAGPNFFSIFFRDGKNYLMLALVMVASALCIALGLGKLFRWDIGLTAGMLAGSMTSTPVLVGAGDTLRQTMADNPQLGQLQDHLSLGYALTYLVGLVSLIFGARYLPKLQHQDLPTSAQQIARERGLDNDTQRKVFLPVIRAYRVGPELVAWADGKNLRELGIYSQTGCYIERIRRNGILATPDGDAVLQVGDEIALVGYPDAHARLDPSFRNGKEVFDRDLLDMRIVTEEIVVKNSNAVSKRLSQVKLTDHGCFLNRVIRSQIEMPIDDNIVLNKGDVLQVSGDARRVKSVADRIGFISIHSQVTDLLAFCAFFIIGLMIGLITFQFTGFSFGIGNAAGLLFAGIMLGFLRANHPTFGYIPQGALNMVKEFGLMVFMAGVGLSAGAGMRHGLGEVGGQMLIAGLIVSLVPVVICFLFGAFVLRMNRALLFGAIMGARTCAPAMDIINDASRSNIPALGYAGTYAIANVLLTLAGTLIIIVWPGVVG.

A run of 6 helical transmembrane segments spans residues leucine 8–glycine 28, leucine 32–glutamine 52, phenylalanine 66–phenylalanine 86, methionine 94–phenylalanine 114, isoleucine 118–alanine 138, and histidine 158–alanine 178. 2 consecutive RCK C-terminal domains span residues leucine 202–asparagine 288 and lysine 290–phenylalanine 373. 5 helical membrane passes run leucine 383–phenylalanine 403, phenylalanine 406–leucine 426, methionine 443–glycine 463, isoleucine 477–valine 497, and isoleucine 541–valine 561.

Belongs to the AAE transporter (TC 2.A.81) family. YbjL subfamily.

It localises to the cell membrane. This is Putative transport protein NT01EI_2530 from Edwardsiella ictaluri (strain 93-146).